A 237-amino-acid polypeptide reads, in one-letter code: uncharacterized protein (237 aa).

7 consecutive transmembrane segments (helical) span residues 19-39 (ILNGIWLITALGLVATAGLAW), 51-71 (YDSPPMYVAIGLLLLCMYGLS), 81-101 (IAGVIYLFLLSLVAIVVASLV), 106-126 (IIIVFSTAGAMFLISMLAGLL), 136-156 (FIIMMTLTGLALVIIVNAALM), 159-179 (RPIWIISCLMIVLWSGIISHG), and 209-229 (LYYYFIGFFGILAAIAITLVW).

It is found in the cell membrane. This is an uncharacterized protein from Escherichia coli (strain K12).